Here is a 183-residue protein sequence, read N- to C-terminus: UPF0302 protein BH3876 (183 aa).

It belongs to the UPF0302 family.

In Halalkalibacterium halodurans (strain ATCC BAA-125 / DSM 18197 / FERM 7344 / JCM 9153 / C-125) (Bacillus halodurans), this protein is UPF0302 protein BH3876.